We begin with the raw amino-acid sequence, 396 residues long: Elongation factor Tu 2 (396 aa).

In terms of domain architecture, tr-type G spans 10–206 (KPHVNIGTIG…AVDSYIPTPQ (197 aa)). Residues 19 to 26 (GHVDHGKT) form a G1 region. 19 to 26 (GHVDHGKT) contributes to the GTP binding site. Threonine 26 contacts Mg(2+). Residues 60–64 (GITIS) are G2. The tract at residues 81–84 (DCPG) is G3. GTP is bound by residues 81 to 85 (DCPGH) and 136 to 139 (NKVD). A G4 region spans residues 136 to 139 (NKVD). The interval 174–176 (SAL) is G5.

This sequence belongs to the TRAFAC class translation factor GTPase superfamily. Classic translation factor GTPase family. EF-Tu/EF-1A subfamily. In terms of assembly, monomer.

The protein localises to the cytoplasm. It catalyses the reaction GTP + H2O = GDP + phosphate + H(+). GTP hydrolase that promotes the GTP-dependent binding of aminoacyl-tRNA to the A-site of ribosomes during protein biosynthesis. This is Elongation factor Tu 2 from Myxococcus xanthus (strain DK1622).